A 416-amino-acid polypeptide reads, in one-letter code: Formyl-CoA:oxalate CoA-transferase (416 aa).

CoA is bound by residues 17 to 18 (QS), R38, 72 to 75 (LNTK), 96 to 98 (NFH), H104, and 137 to 140 (KAYE). D169 serves as the catalytic Nucleophile. Residue 248–250 (GGQ) participates in substrate binding. CoA is bound at residue 273 to 275 (QEQ).

This sequence belongs to the CoA-transferase III family. Frc subfamily. In terms of assembly, homodimer.

It catalyses the reaction formyl-CoA + oxalate = oxalyl-CoA + formate. Its pathway is metabolic intermediate degradation; oxalate degradation; CO(2) and formate from oxalate: step 1/2. Involved in the catabolism of oxalate and in the adapatation to low pH via the induction of the oxalate-dependent acid tolerance response (ATR). Catalyzes the transfer of the CoA moiety from formyl-CoA to oxalate. This Shigella boydii serotype 18 (strain CDC 3083-94 / BS512) protein is Formyl-CoA:oxalate CoA-transferase.